The chain runs to 241 residues: Biosynthetic peptidoglycan transglycosylase (241 aa).

Residues 18–38 (GVIGIIALWMAGILIFAFLPV) form a helical membrane-spanning segment.

This sequence belongs to the glycosyltransferase 51 family.

It is found in the cell inner membrane. It catalyses the reaction [GlcNAc-(1-&gt;4)-Mur2Ac(oyl-L-Ala-gamma-D-Glu-L-Lys-D-Ala-D-Ala)](n)-di-trans,octa-cis-undecaprenyl diphosphate + beta-D-GlcNAc-(1-&gt;4)-Mur2Ac(oyl-L-Ala-gamma-D-Glu-L-Lys-D-Ala-D-Ala)-di-trans,octa-cis-undecaprenyl diphosphate = [GlcNAc-(1-&gt;4)-Mur2Ac(oyl-L-Ala-gamma-D-Glu-L-Lys-D-Ala-D-Ala)](n+1)-di-trans,octa-cis-undecaprenyl diphosphate + di-trans,octa-cis-undecaprenyl diphosphate + H(+). It participates in cell wall biogenesis; peptidoglycan biosynthesis. Peptidoglycan polymerase that catalyzes glycan chain elongation from lipid-linked precursors. This chain is Biosynthetic peptidoglycan transglycosylase, found in Yersinia pseudotuberculosis serotype O:1b (strain IP 31758).